Here is a 570-residue protein sequence, read N- to C-terminus: Proline--tRNA ligase (570 aa).

Belongs to the class-II aminoacyl-tRNA synthetase family. ProS type 1 subfamily. As to quaternary structure, homodimer.

It localises to the cytoplasm. It catalyses the reaction tRNA(Pro) + L-proline + ATP = L-prolyl-tRNA(Pro) + AMP + diphosphate. Functionally, catalyzes the attachment of proline to tRNA(Pro) in a two-step reaction: proline is first activated by ATP to form Pro-AMP and then transferred to the acceptor end of tRNA(Pro). As ProRS can inadvertently accommodate and process non-cognate amino acids such as alanine and cysteine, to avoid such errors it has two additional distinct editing activities against alanine. One activity is designated as 'pretransfer' editing and involves the tRNA(Pro)-independent hydrolysis of activated Ala-AMP. The other activity is designated 'posttransfer' editing and involves deacylation of mischarged Ala-tRNA(Pro). The misacylated Cys-tRNA(Pro) is not edited by ProRS. This Geotalea daltonii (strain DSM 22248 / JCM 15807 / FRC-32) (Geobacter daltonii) protein is Proline--tRNA ligase.